Consider the following 346-residue polypeptide: Galanin receptor type 1 (346 aa).

At 1-33 (MELAPVNLSEGNGSDPEPPAEPRPLFGIGVENF) the chain is on the extracellular side. 2 N-linked (GlcNAc...) asparagine glycosylation sites follow: Asn7 and Asn12. A helical membrane pass occupies residues 34-54 (ITLVVFGLIFAMGVLGNSLVI). The Cytoplasmic portion of the chain corresponds to 55–69 (TVLARSKPGKPRSTT). The chain crosses the membrane as a helical span at residues 70–90 (NLFILNLSIADLAYLLFCIPF). Over 91-108 (QATVYALPTWVLGAFICK) the chain is Extracellular. Cys107 and Cys185 are joined by a disulfide. The chain crosses the membrane as a helical span at residues 109 to 130 (FIHYFFTVSMLVSIFTLAAMSV). Topologically, residues 131–150 (DRYVAIVHSRRSSSLRVSRN) are cytoplasmic. Residues 151 to 171 (ALLGVGFIWALSIAMASPVAY) traverse the membrane as a helical segment. Over 172–196 (YQRLFHRDSNQTFCWEHWPNQLHKK) the chain is Extracellular. N-linked (GlcNAc...) asparagine glycosylation is present at Asn181. The chain crosses the membrane as a helical span at residues 197-217 (AYVVCTFVFGYLLPLLLICFC). Residues 218-246 (YAKVLNHLHKKLKNMSKKSEASKKKTAQT) are Cytoplasmic-facing. Residues 247-267 (VLVVVVVFGISWLPHHVIHLW) form a helical membrane-spanning segment. At 268–269 (AE) the chain is on the extracellular side. Residues 270-290 (FGAFPLTPASFFFRITAHCLA) form a helical membrane-spanning segment. Over 291 to 346 (YSNSSVNPIIYAFLSENFRKAYKQVFKCRVCNESPHGDAKEKNRIDTPPSTNCTHV) the chain is Cytoplasmic. A lipid anchor (S-palmitoyl cysteine) is attached at Cys318. Over residues 326–335 (HGDAKEKNRI) the composition is skewed to basic and acidic residues. The disordered stretch occupies residues 326–346 (HGDAKEKNRIDTPPSTNCTHV).

Belongs to the G-protein coupled receptor 1 family. Interacts with GRP39 AND HTR1A. In terms of processing, three cysteine residues are found in the C-terminus, at least one of which may be palmitoylated. As to expression, spinal cord, small intestine, Rin14B insulinoma cells and several brain regions, particularly ventral hippocampus, amygdala, supraoptic nucleus, hypothalamus, thalamus, lateral parabrachial nucleus and locus coeruleus.

Its subcellular location is the cell membrane. Functionally, receptor for the hormone galanin. The activity of this receptor is mediated by G proteins that inhibit adenylate cyclase activity. The polypeptide is Galanin receptor type 1 (Galr1) (Rattus norvegicus (Rat)).